The chain runs to 44 residues: MKNSFIGTTGRIPLWIVGFVVGSLALGLLGILFYGSYTGLGSSL.

Residues 12–32 (IPLWIVGFVVGSLALGLLGIL) traverse the membrane as a helical segment.

This sequence belongs to the PsbJ family. In terms of assembly, PSII is composed of 1 copy each of membrane proteins PsbA, PsbB, PsbC, PsbD, PsbE, PsbF, PsbH, PsbI, PsbJ, PsbK, PsbL, PsbM, PsbT, PsbY, PsbZ, Psb30/Ycf12, at least 3 peripheral proteins of the oxygen-evolving complex and a large number of cofactors. It forms dimeric complexes.

The protein localises to the plastid. It is found in the chloroplast thylakoid membrane. Its function is as follows. One of the components of the core complex of photosystem II (PSII). PSII is a light-driven water:plastoquinone oxidoreductase that uses light energy to abstract electrons from H(2)O, generating O(2) and a proton gradient subsequently used for ATP formation. It consists of a core antenna complex that captures photons, and an electron transfer chain that converts photonic excitation into a charge separation. This Bigelowiella natans (Pedinomonas minutissima) protein is Photosystem II reaction center protein J.